The following is a 40-amino-acid chain: Photosystem II reaction center protein J (40 aa).

Residues 8–28 form a helical membrane-spanning segment; sequence IPLWLIGTVTGILVIGLIGVF.

This sequence belongs to the PsbJ family. In terms of assembly, PSII is composed of 1 copy each of membrane proteins PsbA, PsbB, PsbC, PsbD, PsbE, PsbF, PsbH, PsbI, PsbJ, PsbK, PsbL, PsbM, PsbT, PsbX, PsbY, PsbZ, Psb30/Ycf12, at least 3 peripheral proteins of the oxygen-evolving complex and a large number of cofactors. It forms dimeric complexes.

Its subcellular location is the plastid. The protein resides in the chloroplast thylakoid membrane. One of the components of the core complex of photosystem II (PSII). PSII is a light-driven water:plastoquinone oxidoreductase that uses light energy to abstract electrons from H(2)O, generating O(2) and a proton gradient subsequently used for ATP formation. It consists of a core antenna complex that captures photons, and an electron transfer chain that converts photonic excitation into a charge separation. This is Photosystem II reaction center protein J from Nymphaea alba (White water-lily).